A 467-amino-acid chain; its full sequence is 3-isopropylmalate dehydratase large subunit (467 aa).

[4Fe-4S] cluster is bound by residues Cys349, Cys408, and Cys411.

This sequence belongs to the aconitase/IPM isomerase family. LeuC type 1 subfamily. In terms of assembly, heterodimer of LeuC and LeuD. [4Fe-4S] cluster is required as a cofactor.

It catalyses the reaction (2R,3S)-3-isopropylmalate = (2S)-2-isopropylmalate. It participates in amino-acid biosynthesis; L-leucine biosynthesis; L-leucine from 3-methyl-2-oxobutanoate: step 2/4. In terms of biological role, catalyzes the isomerization between 2-isopropylmalate and 3-isopropylmalate, via the formation of 2-isopropylmaleate. This is 3-isopropylmalate dehydratase large subunit from Dinoroseobacter shibae (strain DSM 16493 / NCIMB 14021 / DFL 12).